The following is a 596-amino-acid chain: Nodulation outer protein X (596 aa).

The protein localises to the secreted. This chain is Nodulation outer protein X (nopX), found in Sinorhizobium fredii (strain NBRC 101917 / NGR234).